Here is a 346-residue protein sequence, read N- to C-terminus: 3',5'-cyclic-nucleotide phosphodiesterase (346 aa).

It belongs to the cyclic nucleotide phosphodiesterase class-II family.

The catalysed reaction is a nucleoside 3',5'-cyclic phosphate + H2O = a nucleoside 5'-phosphate + H(+). In Schizosaccharomyces pombe (strain 972 / ATCC 24843) (Fission yeast), this protein is 3',5'-cyclic-nucleotide phosphodiesterase (cgs2).